The primary structure comprises 488 residues: Ribulose bisphosphate carboxylase large chain (488 aa).

Residues Asn-128 and Thr-178 each coordinate substrate. Lys-180 functions as the Proton acceptor in the catalytic mechanism. Position 182 (Lys-182) interacts with substrate. 3 residues coordinate Mg(2+): Lys-206, Asp-208, and Glu-209. N6-carboxylysine is present on Lys-206. His-298 serves as the catalytic Proton acceptor. Residues Arg-299, His-331, and Ser-383 each contribute to the substrate site.

Belongs to the RuBisCO large chain family. Type I subfamily. Heterohexadecamer of 8 large chains and 8 small chains. It depends on Mg(2+) as a cofactor.

The catalysed reaction is 2 (2R)-3-phosphoglycerate + 2 H(+) = D-ribulose 1,5-bisphosphate + CO2 + H2O. It carries out the reaction D-ribulose 1,5-bisphosphate + O2 = 2-phosphoglycolate + (2R)-3-phosphoglycerate + 2 H(+). Functionally, ruBisCO catalyzes two reactions: the carboxylation of D-ribulose 1,5-bisphosphate, the primary event in carbon dioxide fixation, as well as the oxidative fragmentation of the pentose substrate. Both reactions occur simultaneously and in competition at the same active site. This is Ribulose bisphosphate carboxylase large chain from Variovorax paradoxus (strain S110).